We begin with the raw amino-acid sequence, 363 residues long: Probable endopolygalacturonase B (363 aa).

The N-terminal stretch at Met-1–Ala-20 is a signal peptide. A propeptide spanning residues Val-21–Arg-28 is cleaved from the precursor. Cys-31 and Cys-46 are disulfide-bonded. PbH1 repeat units lie at residues Ser-158–Ser-187, Ser-188–Ser-209, Gly-210–Ser-230, Val-239–Thr-260, Val-268–Gln-290, and Thr-302–Gly-347. Asn-162 carries an N-linked (GlcNAc...) asparagine glycan. Asp-202 acts as the Proton donor in catalysis. A disulfide bridge links Cys-204 with Cys-220. His-224 is a catalytic residue. Intrachain disulfides connect Cys-330–Cys-335 and Cys-354–Cys-363.

It belongs to the glycosyl hydrolase 28 family.

The protein localises to the secreted. The enzyme catalyses (1,4-alpha-D-galacturonosyl)n+m + H2O = (1,4-alpha-D-galacturonosyl)n + (1,4-alpha-D-galacturonosyl)m.. In terms of biological role, involved in maceration and soft-rotting of plant tissue. Hydrolyzes the 1,4-alpha glycosidic bonds of de-esterified pectate in the smooth region of the plant cell wall. This Aspergillus flavus (strain ATCC 200026 / FGSC A1120 / IAM 13836 / NRRL 3357 / JCM 12722 / SRRC 167) protein is Probable endopolygalacturonase B (pgaB).